The following is a 541-amino-acid chain: Chaperonin GroEL (541 aa).

Residues 29–32 (TLGP), 86–90 (DGTTT), Gly-413, 476–478 (NAA), and Asp-492 each bind ATP. The interval 521–541 (KPEDNPAPAAPAANPGMGGMM) is disordered. The segment covering 526-535 (PAPAAPAANP) has biased composition (low complexity).

The protein belongs to the chaperonin (HSP60) family. In terms of assembly, forms a cylinder of 14 subunits composed of two heptameric rings stacked back-to-back. Interacts with the co-chaperonin GroES.

Its subcellular location is the cytoplasm. The catalysed reaction is ATP + H2O + a folded polypeptide = ADP + phosphate + an unfolded polypeptide.. Together with its co-chaperonin GroES, plays an essential role in assisting protein folding. The GroEL-GroES system forms a nano-cage that allows encapsulation of the non-native substrate proteins and provides a physical environment optimized to promote and accelerate protein folding. This chain is Chaperonin GroEL, found in Levilactobacillus brevis (strain ATCC 367 / BCRC 12310 / CIP 105137 / JCM 1170 / LMG 11437 / NCIMB 947 / NCTC 947) (Lactobacillus brevis).